We begin with the raw amino-acid sequence, 116 residues long: Cysteine proteinase inhibitor 1 (116 aa).

The N-terminal stretch at 1 to 22 is a signal peptide; sequence MVPKPLSLLLLLLLALSAAVVG. A Cystatin domain is found at 30–89; it reads GGWRPIENLNSAEVQDVAQFAVSEHNKQANDELQYQSVVRGYTQVVAGTNYRLVIAAKDG. Residues 73–77 carry the Secondary area of contact motif; the sequence is QVVAG. N-linked (GlcNAc...) asparagine glycosylation is present at Asn109.

It belongs to the cystatin family. Phytocystatin subfamily.

The protein resides in the secreted. Its function is as follows. Specific inhibitor of papain family cysteine proteinases. This chain is Cysteine proteinase inhibitor 1, found in Actinidia chinensis var. chinensis (Chinese soft-hair kiwi).